The sequence spans 430 residues: Adenylosuccinate synthetase (430 aa).

GTP-binding positions include 12–18 (GDEGKGK) and 40–42 (GHT). The active-site Proton acceptor is Asp13. 2 residues coordinate Mg(2+): Asp13 and Gly40. IMP contacts are provided by residues 13–16 (DEGK), 38–41 (NAGH), Thr130, Arg144, Gln224, Thr239, and Arg303. His41 serves as the catalytic Proton donor. 299-305 (VVTGRPR) contributes to the substrate binding site. GTP contacts are provided by residues Arg305, 331–333 (KLD), and 413–415 (STS).

This sequence belongs to the adenylosuccinate synthetase family. In terms of assembly, homodimer. Mg(2+) is required as a cofactor.

It is found in the cytoplasm. The catalysed reaction is IMP + L-aspartate + GTP = N(6)-(1,2-dicarboxyethyl)-AMP + GDP + phosphate + 2 H(+). The protein operates within purine metabolism; AMP biosynthesis via de novo pathway; AMP from IMP: step 1/2. Its function is as follows. Plays an important role in the de novo pathway of purine nucleotide biosynthesis. Catalyzes the first committed step in the biosynthesis of AMP from IMP. This Azorhizobium caulinodans (strain ATCC 43989 / DSM 5975 / JCM 20966 / LMG 6465 / NBRC 14845 / NCIMB 13405 / ORS 571) protein is Adenylosuccinate synthetase.